The sequence spans 148 residues: Probable calcium-binding protein CML14 (148 aa).

EF-hand domains follow at residues 9–44 (DQVS…LGGN), 80–115 (PFDR…IGEK), and 116–148 (LQPS…MVAK). Positions 22, 24, 26, 28, and 33 each coordinate Ca(2+).

Functionally, potential calcium sensor. The protein is Probable calcium-binding protein CML14 (CML14) of Arabidopsis thaliana (Mouse-ear cress).